The primary structure comprises 313 residues: Ribosomal RNA small subunit methyltransferase H (313 aa).

S-adenosyl-L-methionine is bound by residues 35-37 (GGH), aspartate 55, phenylalanine 80, aspartate 102, and glutamine 109.

Belongs to the methyltransferase superfamily. RsmH family.

The protein resides in the cytoplasm. The catalysed reaction is cytidine(1402) in 16S rRNA + S-adenosyl-L-methionine = N(4)-methylcytidine(1402) in 16S rRNA + S-adenosyl-L-homocysteine + H(+). Functionally, specifically methylates the N4 position of cytidine in position 1402 (C1402) of 16S rRNA. This chain is Ribosomal RNA small subunit methyltransferase H, found in Shewanella putrefaciens (strain CN-32 / ATCC BAA-453).